The following is a 197-amino-acid chain: Recombination protein RecR (197 aa).

A C4-type zinc finger spans residues cysteine 55–cysteine 70. The Toprim domain maps to glutamine 78–proline 173.

Belongs to the RecR family.

Its function is as follows. May play a role in DNA repair. It seems to be involved in an RecBC-independent recombinational process of DNA repair. It may act with RecF and RecO. The polypeptide is Recombination protein RecR (Xanthomonas campestris pv. campestris (strain 8004)).